A 299-amino-acid chain; its full sequence is Homeobox protein Nkx-2.5 (299 aa).

Residues 90–119 are compositionally biased toward basic and acidic residues; the sequence is KDPKDHKKDICPLQKTLEHDKREAEDPERP. A disordered region spans residues 90–128; sequence KDPKDHKKDICPLQKTLEHDKREAEDPERPRQRKRRKPR. A DNA-binding region (homeobox) is located at residues 124-183; sequence RRKPRVLFSQAQVYELERRFKQQKYLSAPERDHLANVLKLTSTQVKIWFQNRRYKCKRQR.

It belongs to the NK-2 homeobox family. Homodimer (via the homeobox); binds DNA as homodimer. In terms of tissue distribution, heart and gut tissue.

It localises to the nucleus. Its function is as follows. Transcription factor required for the development of the heart and the spleen. Implicated in commitment to and/or differentiation of the myocardial lineage. May regulate the expression of genes involved in cardiogenesis and play a role in the formation of gut and the pharyngeal region. Binds to the core DNA motif of promoter. In Xenopus laevis (African clawed frog), this protein is Homeobox protein Nkx-2.5 (nkx-2.5).